The chain runs to 149 residues: UPF0260 protein Psyr_1567 (149 aa).

This sequence belongs to the UPF0260 family.

This Pseudomonas syringae pv. syringae (strain B728a) protein is UPF0260 protein Psyr_1567.